The following is a 553-amino-acid chain: Sensitive to high expression protein 9 homolog, mitochondrial (553 aa).

The interval 61 to 174 (FFSTQPPKDT…TAQPELPSRT (114 aa)) is disordered. Positions 62–84 (FSTQPPKDTPENMNNKETGSSNV) are enriched in polar residues. The segment covering 103-116 (AKEDTTDATNKSET) has biased composition (basic and acidic residues). Positions 133–160 (SDVSSASTSDSANSSETTTTTSETTPEN) are enriched in low complexity. Coiled coils occupy residues 210–241 (SAIE…HNYK) and 277–309 (RLDH…DLNA). Residues 331-351 (WGTWGLMGVNVLLFLVLQFVA) traverse the membrane as a helical segment. At 352–523 (EPWRRKRLMK…RIDLKMRDVS (172 aa)) the chain is on the mitochondrial intermembrane side. Disordered stretches follow at residues 408–428 (ALAS…RTEG) and 443–497 (AEEA…QTLS). 2 stretches are compositionally biased toward low complexity: residues 443 to 473 (AEEA…QTPE) and 484 to 495 (TWKQTAQKWQQT). The helical transmembrane segment at 524–544 (LLALESAATGAAVVASVAFFV) threads the bilayer. At 545-553 (LRSSGSGKA) the chain is on the mitochondrial matrix side.

Belongs to the SHE9 family. In terms of assembly, homooligomer.

The protein resides in the mitochondrion inner membrane. Required for the maintenance of the structure of the mitochondrial inner membrane. Involved in mitochondrial morphology. Causes growth arrest when highly overexpressed. The chain is Sensitive to high expression protein 9 homolog, mitochondrial (she-9) from Neurospora crassa (strain ATCC 24698 / 74-OR23-1A / CBS 708.71 / DSM 1257 / FGSC 987).